We begin with the raw amino-acid sequence, 281 residues long: Probable endonuclease 4 (281 aa).

Residues H69, H109, E145, D179, H182, H216, D229, H231, and E261 each coordinate Zn(2+).

Belongs to the AP endonuclease 2 family. It depends on Zn(2+) as a cofactor.

It catalyses the reaction Endonucleolytic cleavage to 5'-phosphooligonucleotide end-products.. In terms of biological role, endonuclease IV plays a role in DNA repair. It cleaves phosphodiester bonds at apurinic or apyrimidinic (AP) sites, generating a 3'-hydroxyl group and a 5'-terminal sugar phosphate. This is Probable endonuclease 4 from Proteus mirabilis (strain HI4320).